The chain runs to 186 residues: Ribosome-recycling factor (186 aa).

2 stretches are compositionally biased toward basic and acidic residues: residues 134 to 169 (RDAN…KKAE) and 176 to 186 (AKAREAEVMED). Positions 134–186 (RDANKAAETAEKDKEMTEDDRDKTKDQVQELTKKAETNVNESAKAREAEVMED) are disordered.

The protein belongs to the RRF family.

It localises to the cytoplasm. Functionally, responsible for the release of ribosomes from messenger RNA at the termination of protein biosynthesis. May increase the efficiency of translation by recycling ribosomes from one round of translation to another. The polypeptide is Ribosome-recycling factor (Rhodopirellula baltica (strain DSM 10527 / NCIMB 13988 / SH1)).